Consider the following 251-residue polypeptide: Segregation and condensation protein A (251 aa).

It belongs to the ScpA family. As to quaternary structure, component of a cohesin-like complex composed of ScpA, ScpB and the Smc homodimer, in which ScpA and ScpB bind to the head domain of Smc. The presence of the three proteins is required for the association of the complex with DNA.

Its subcellular location is the cytoplasm. Its function is as follows. Participates in chromosomal partition during cell division. May act via the formation of a condensin-like complex containing Smc and ScpB that pull DNA away from mid-cell into both cell halves. This Clostridium botulinum (strain Eklund 17B / Type B) protein is Segregation and condensation protein A.